Reading from the N-terminus, the 236-residue chain is Probable transcriptional regulatory protein UUR10_0292 (236 aa).

Belongs to the TACO1 family.

The protein resides in the cytoplasm. This is Probable transcriptional regulatory protein UUR10_0292 from Ureaplasma urealyticum serovar 10 (strain ATCC 33699 / Western).